A 442-amino-acid polypeptide reads, in one-letter code: 3-phosphoshikimate 1-carboxyvinyltransferase (442 aa).

Residues K25, S26, and R30 each coordinate 3-phosphoshikimate. K25 is a binding site for phosphoenolpyruvate. G97 and R125 together coordinate phosphoenolpyruvate. 3-phosphoshikimate contacts are provided by S170, Q172, D323, and K350. Residue Q172 participates in phosphoenolpyruvate binding. D323 (proton acceptor) is an active-site residue. Residues R354 and R399 each coordinate phosphoenolpyruvate.

This sequence belongs to the EPSP synthase family. In terms of assembly, monomer.

The protein localises to the cytoplasm. It catalyses the reaction 3-phosphoshikimate + phosphoenolpyruvate = 5-O-(1-carboxyvinyl)-3-phosphoshikimate + phosphate. It functions in the pathway metabolic intermediate biosynthesis; chorismate biosynthesis; chorismate from D-erythrose 4-phosphate and phosphoenolpyruvate: step 6/7. Catalyzes the transfer of the enolpyruvyl moiety of phosphoenolpyruvate (PEP) to the 5-hydroxyl of shikimate-3-phosphate (S3P) to produce enolpyruvyl shikimate-3-phosphate and inorganic phosphate. The chain is 3-phosphoshikimate 1-carboxyvinyltransferase from Bartonella henselae (strain ATCC 49882 / DSM 28221 / CCUG 30454 / Houston 1) (Rochalimaea henselae).